The following is a 123-amino-acid chain: Ig heavy chain V region HPCG13 (123 aa).

The Ig-like domain maps to 1–114; sequence EVKLVESGGG…GSYWYFDVWG (114 aa).

The sequence is that of Ig heavy chain V region HPCG13 from Mus musculus (Mouse).